Consider the following 299-residue polypeptide: Acetylglutamate kinase (299 aa).

Residues 70 to 71 (GG), Arg92, and Asn197 contribute to the substrate site.

This sequence belongs to the acetylglutamate kinase family. ArgB subfamily.

It localises to the cytoplasm. The catalysed reaction is N-acetyl-L-glutamate + ATP = N-acetyl-L-glutamyl 5-phosphate + ADP. It functions in the pathway amino-acid biosynthesis; L-arginine biosynthesis; N(2)-acetyl-L-ornithine from L-glutamate: step 2/4. Functionally, catalyzes the ATP-dependent phosphorylation of N-acetyl-L-glutamate. This Acidiphilium cryptum (strain JF-5) protein is Acetylglutamate kinase.